The primary structure comprises 843 residues: Aconitase AMT8-2 (843 aa).

258–260 (DSH) provides a ligand contact to substrate. 3 residues coordinate [4Fe-4S] cluster: C450, C513, and C516. Residues R536, R541, and 712-713 (SR) contribute to the substrate site.

The protein belongs to the aconitase/IPM isomerase family.

Its pathway is mycotoxin biosynthesis. Functionally, aconitase; part of the gene clusters that mediate the biosynthesis of AM-toxins, host-selective toxins (HSTs) causing Alternaria blotch on apple, a worldwide distributed disease. AM-toxins are cyclic depsipeptides containing the 3 residues 2-hydroxy-isovaleric acid (2-HIV), dehydroalanine, L-alanine which are common for all 3 AM-toxins I to III. The fourth precursor is L-alpha-amino-methoxyphenyl-valeric acid (L-Amv) for AM-toxin I, L-alpha-amino-phenyl-valeric acid (L-Apv) for AM-toxin II, and L-alpha-amino-hydroxyphenyl-valeric acid (L-Ahv) for AM-toxin III. AM-toxins have two target sites for affecting susceptible apple cells; they cause invagination of the plasma membrane and electrolyte loss and chloroplast disorganization. The non-ribosomal peptide synthetase AMT1 contains 4 catalytic modules and is responsible for activation of each residue in AM-toxin. The aldo-keto reductase AMT2 catalyzes the conversion of 2-keto-isovaleric acid (2-KIV) to 2-hydroxy-isovaleric acid (2-HIV), one of the precursor residues incorporated by AMT1 during AM-toxin biosynthesis, by reduction of its ketone to an alcohol. The cytochrome P450 monooxygenase AMT3 and the thioesterase AMT4 are also important for AM-toxin production, but their exact function within the AM-toxin biosynthesis are not known yet. Up to 21 proteins (including AMT1 to AMT4) are predicted to be involved in AM-toxin biosynthesis since their expression ishighly up-regulated in AM-toxin-producing cultures. This Alternaria alternata (Alternaria rot fungus) protein is Aconitase AMT8-2.